The sequence spans 2527 residues: Leucine-rich repeat serine/threonine-protein kinase 2 (2527 aa).

A required for RAB29-mediated activation region spans residues 1–969 (MASGACQGCE…RSSRLPSHMR (969 aa)). Positions 9–33 (CEEEEEEEALKKLIVRLNNVQEGKQ) form a coiled coil. Phosphoserine is present on residues S910, S935, S955, and S973. Positions 957 to 979 (ESLRSSRLPSHMRQSDSSSSLAS) are disordered. Low complexity predominate over residues 961 to 978 (SSRLPSHMRQSDSSSSLA). LRR repeat units follow at residues 983–1004 (HITS…SQKC), 1012–1033 (HLTK…LCET), 1036–1057 (CLIH…VLKM), 1059–1080 (RITN…DPAM), 1084–1105 (SLKQ…LAQV), 1108–1129 (KLEQ…LSLK), 1130–1150 (ELKI…DFLE), 1156–1171 (ESFS…MPAL), 1174–1196 (SITS…FSLP), 1197–1218 (HLRS…AHWK), 1221–1245 (NLRE…HVWS), 1246–1267 (RVEK…IGCL), and 1269–1291 (NLTS…MGKL). Residue S1292 is modified to Phosphoserine; by autocatalysis. A Roc domain is found at 1328-1511 (KAVPYNRMKL…KTIINESLNF (184 aa)). 1341–1348 (GNTGSGKT) contacts GTP. S1444 carries the phosphoserine modification. In terms of domain architecture, COR spans 1543-1740 (TEFPVINRKH…RMYWRQGIYL (198 aa)). The region spanning 1879–2146 (EAPEFLLGDG…LICLMRHILI (268 aa)) is the Protein kinase domain. Residues L1885, D1887, G1888, G1891, V1893, A1904, K1906, M1947, E1948, A1950, S1954, and R1957 each contribute to the ATP site. The active-site Proton acceptor is the D1994. 4 residues coordinate ATP: H1998, L2001, A2016, and D2017. Residue 2098-2121 (EYGCAPWPMVEKLITKCLKENPQE) participates in GTP binding. 7 WD repeats span residues 2139 to 2183 (CLMR…SLFD), 2188 to 2228 (RYSY…LVIN), 2233 to 2276 (TKRH…MIFE), 2281 to 2327 (KCKG…FSFS), 2333 to 2377 (QKLI…EVWD), 2402 to 2438 (KESK…LLLD), and 2443 to 2497 (RVIR…SIWD). 2295-2298 (DVST) lines the GTP pocket.

The protein belongs to the protein kinase superfamily. TKL Ser/Thr protein kinase family. In terms of assembly, homodimer. Homotetramer; when activated by GTP-bound RAB29. Interacts with PRKN, PRDX3 and TPCN2. Interacts with VPS35. Interacts (via N-terminus) with RAB29; this interaction is direct and stimulates kinase activity. Interacts (via ROC domain) with SEC16A. Interacts with APP; interaction promotes phosphorylation of 'Thr-743' of APP. Interacts with MAPT. Interacts with RAB8A, RAB10, and RAB12. Interacts (via N-terminus) with RAB32. Interacts with YWHAG; this interaction is dependent on phosphorylation of Ser-910 and either Ser-935 or Ser-1444. Interacts with SFN; this interaction is dependent on phosphorylation of Ser-910 and/or Ser-935. It depends on Mg(2+) as a cofactor. Post-translationally, autophosphorylated at Ser-1292. Autophosphorylation is stimulated by RAB29. Phosphorylation of Ser-910 and Ser-935 or Ser-1444 facilitates interaction with YWHAG. Phosphorylation of Ser-910 and/or Ser-935 facilitates interaction with SFN. In terms of processing, ubiquitinated by TRIM1; undergoes 'Lys-48'-linked polyubiquitination leading to proteasomal degradation. As to expression, expressed in the brain (at protein level). Detected throughout the adult brain. Expressed in deep cerebral cortex layers, superficial cingulate cortex layers, the piriform cortex, hippocampal formation, caudate putamen, substantia nigra, the basolateral and basomedial anterior amygdala nuclei, reticular thalamic nucleus and also in the cerebellar granular cell layer. Highly expressed in the striatum, cortex and olfactory tubercle. Little or no expression in the substantia nigra, where dopaminergic neurons preferentially degenerate in Parkinson disease. Expression is particularly high in brain dopaminoceptive areas. High and strikingly specific expression in striatum and parts of cortex and no signals in dopamine neurons.

Its subcellular location is the cytoplasmic vesicle. The protein resides in the perikaryon. It is found in the cell projection. It localises to the axon. The protein localises to the dendrite. Its subcellular location is the golgi apparatus membrane. The protein resides in the endoplasmic reticulum membrane. It is found in the secretory vesicle. It localises to the synaptic vesicle membrane. The protein localises to the endosome. Its subcellular location is the lysosome. The protein resides in the mitochondrion outer membrane. It is found in the cytoplasm. It localises to the cytoskeleton. The protein localises to the phagosome. It carries out the reaction L-threonyl-[protein] + ATP = O-phospho-L-threonyl-[protein] + ADP + H(+). The enzyme catalyses L-seryl-[protein] + ATP = O-phospho-L-seryl-[protein] + ADP + H(+). It catalyses the reaction GTP + H2O = GDP + phosphate + H(+). Its activity is regulated as follows. Kinase activity is regulated by the GTPase activity of the ROC domain. GTP-bound LRRK2 kinase activity is stimulated by RAB29. Phosphorylation of RAB10 'Thr-73' is stimulated by RAB29 and RAB32. Inhibited by small molecule inhibitors MLi-2 and LRRK2-IN-1. Its function is as follows. Serine/threonine-protein kinase which phosphorylates a broad range of proteins involved in multiple processes such as neuronal plasticity, innate immunity, autophagy, and vesicle trafficking. Is a key regulator of RAB GTPases by regulating the GTP/GDP exchange and interaction partners of RABs through phosphorylation. Phosphorylates RAB3A, RAB3B, RAB3C, RAB3D, RAB8A, RAB8B, RAB10, RAB12, RAB29, RAB35, and RAB43. Regulates the RAB3IP-catalyzed GDP/GTP exchange for RAB8A through the phosphorylation of 'Thr-72' on RAB8A. Inhibits the interaction between RAB8A and GDI1 and/or GDI2 by phosphorylating 'Thr-72' on RAB8A. Regulates primary ciliogenesis through phosphorylation of RAB8A and RAB10, which promotes SHH signaling in the brain. Together with RAB29, plays a role in the retrograde trafficking pathway for recycling proteins, such as mannose-6-phosphate receptor (M6PR), between lysosomes and the Golgi apparatus in a retromer-dependent manner. Regulates neuronal process morphology in the intact central nervous system (CNS). Plays an important role in recruiting SEC16A to endoplasmic reticulum exit sites (ERES) and in regulating ER to Golgi vesicle-mediated transport and ERES organization. Positively regulates autophagy through a calcium-dependent activation of the CaMKK/AMPK signaling pathway. The process involves activation of nicotinic acid adenine dinucleotide phosphate (NAADP) receptors, increase in lysosomal pH, and calcium release from lysosomes. Phosphorylates PRDX3. By phosphorylating APP on 'Thr-743', which promotes the production and the nuclear translocation of the APP intracellular domain (AICD), regulates dopaminergic neuron apoptosis. Acts as a positive regulator of innate immunity by mediating phosphorylation of RIPK2 downstream of NOD1 and NOD2, thereby enhancing RIPK2 activation. Independent of its kinase activity, inhibits the proteasomal degradation of MAPT, thus promoting MAPT oligomerization and secretion. In addition, has GTPase activity via its Roc domain which regulates LRKK2 kinase activity. Recruited by RAB29/RAB7L1 to overloaded lysosomes where it phosphorylates and stabilizes RAB8A and RAB10 which promote lysosomal content release and suppress lysosomal enlargement through the EHBP1 and EHBP1L1 effector proteins. The protein is Leucine-rich repeat serine/threonine-protein kinase 2 (Lrrk2) of Mus musculus (Mouse).